Here is a 1147-residue protein sequence, read N- to C-terminus: Sterol regulatory element-binding protein 1 (1147 aa).

A transcriptional activation (acidic) region spans residues 1-60; it reads MDEPPFSEAALEQALGEPCDLDAALLTDIEDMLQLINNQDSDFPGLFDPPYAGSGAGGTD. At 1–487 the chain is on the cytoplasmic side; that stretch reads MDEPPFSEAA…HSRGMLDRSR (487 aa). The short motif at 27 to 35 is the 9aaTAD element; sequence TDIEDMLQL. A disordered region spans residues 39 to 193; that stretch reads QDSDFPGLFD…PLPGLPLASP (155 aa). Composition is skewed to low complexity over residues 62 to 71 and 78 to 95; these read ASPDTSSPGS and TLSS…AAPS. Pro residues predominate over residues 96–105; it reads PLSPPQPAPT. Residues serine 98 and serine 117 each carry the phosphoserine modification. A compositionally biased stretch (low complexity) spans 170-190; that stretch reads GGFSTGSPPGNTQQPLPGLPL. Residues 234-497 are interaction with LMNA; sequence QQVPVLLQPH…LALCTLVFLC (264 aa). The 51-residue stretch at 323–373 folds into the bHLH domain; sequence EKRTAHNAIEKRYRSSINDKIIELKDLVVGTEAKLNKSAVLRKAIDYIRFL. Phosphoserine; by SIK1 occurs at positions 337 and 338. Positions 373–394 are leucine-zipper; the sequence is LQHSNQKLKQENLSLRTAVHKS. Serine 396 bears the Phosphoserine; by AMPK mark. Serine 402 is modified (phosphoserine; by SIK1). The interval 421 to 479 is disordered; that stretch reads VEDTLTPPPSDAGSPFQSSPLSLGSRGSGSGGSGSDSEPDSPVFEDSKAKPEQRPSLHS. Residue serine 457 is modified to Phosphoserine. Basic and acidic residues predominate over residues 465-479; that stretch reads EDSKAKPEQRPSLHS. Residues 488 to 508 traverse the membrane as a helical segment; it reads LALCTLVFLCLSCNPLASLLG. Residues 509–547 are Lumenal-facing; the sequence is ARGLPSPSDTTSVYHSPGRNVLGTESRDGPGWAQWLLPP. A helical membrane pass occupies residues 548–568; that stretch reads VVWLLNGLLVLVSLVLLFVYG. Residues 569–1147 are Cytoplasmic-facing; the sequence is EPVTRPHSGP…LGGGTTVTSS (579 aa). A Phosphoserine modification is found at serine 1060.

The protein belongs to the SREBP family. Forms a tight complex with SCAP, the SCAP-SREBP complex, in the endoplasmic reticulum membrane and the Golgi apparatus. Interacts with PAQR3; the interaction anchors the SCAP-SREBP complex to the Golgi apparatus in low cholesterol conditions. In terms of assembly, efficient DNA binding of the soluble transcription factor fragment requires dimerization with another bHLH protein. Interacts with CEBPA, the interaction produces a transcriptional synergy. Interacts with LMNA. Post-translationally, processed in the Golgi apparatus, releasing the protein from the membrane. At low cholesterol the SCAP-SREBP complex is recruited into COPII vesicles for export from the endoplasmic reticulum. In the Golgi, complex SREBPs are cleaved sequentially by site-1 (MBTPS1, S1P) and site-2 (MBTPS2, S2P) protease. The first cleavage by site-1 protease occurs within the luminal loop, the second cleavage by site-2 protease occurs within the first transmembrane domain, releasing the transcription factor from the Golgi membrane. In terms of processing, phosphorylated by AMPK, leading to suppress protein processing and nuclear translocation, and repress target gene expression. Phosphorylation at Ser-402 by SIK1 represses activity possibly by inhibiting DNA-binding. SCAP-free SREBF1 is ubiquitinated by the BCR(ARMC5) complex, leading to its degradation. Post-translationally, ubiquitinated; the nuclear form has a rapid turnover and is rapidly ubiquitinated and degraded by the proteasome in the nucleus. In terms of tissue distribution, expressed in a wide variety of tissues, most abundant in liver and adrenal gland. In fetal tissues lung and liver shows highest expression. As to expression, predominates in hepatoma cell lines. Also expressed in kidney, brain, white fat, and muscle. Predominantly expressed in liver and adipose tissues. Also expressed in kidney, brain, white fat, and muscle.

It is found in the endoplasmic reticulum membrane. Its subcellular location is the golgi apparatus membrane. The protein localises to the cytoplasmic vesicle. The protein resides in the COPII-coated vesicle membrane. It localises to the nucleus. With respect to regulation, activation by cleavage is down-regulated upon activation of SIRT3-dependent PRKAA1/AMPK-alpha signaling cascade which leads to inhibition of ATP-consuming lipogenesis to restore cellular energy balance. Precursor of the transcription factor form (Processed sterol regulatory element-binding protein 1), which is embedded in the endoplasmic reticulum membrane. Low sterol concentrations promote processing of this form, releasing the transcription factor form that translocates into the nucleus and activates transcription of genes involved in cholesterol biosynthesis and lipid homeostasis. In terms of biological role, key transcription factor that regulates expression of genes involved in cholesterol biosynthesis and lipid homeostasis. Binds to the sterol regulatory element 1 (SRE-1) (5'-ATCACCCCAC-3'). Has dual sequence specificity binding to both an E-box motif (5'-ATCACGTGA-3') and to SRE-1 (5'-ATCACCCCAC-3'). Regulates the promoters of genes involved in cholesterol biosynthesis and the LDL receptor (LDLR) pathway of sterol regulation. Functionally, isoform expressed only in select tissues, which has higher transcriptional activity compared to SREBP-1C. Able to stimulate both lipogenic and cholesterogenic gene expression. Has a role in the nutritional regulation of fatty acids and triglycerides in lipogenic organs such as the liver. Required for innate immune response in macrophages by regulating lipid metabolism. Its function is as follows. Predominant isoform expressed in most tissues, which has weaker transcriptional activity compared to isoform SREBP-1A. Primarily controls expression of lipogenic gene. Strongly activates global lipid synthesis in rapidly growing cells. The absence of Golgi proteolytic processing requirement makes this isoform constitutively active in transactivation of lipogenic gene promoters. The polypeptide is Sterol regulatory element-binding protein 1 (Homo sapiens (Human)).